The sequence spans 275 residues: Proteasome subunit beta (275 aa).

Positions 1 to 52 (MQDTTANQVAANATSSFTEHLQRNRPGLLPYNQPFPAALTGAGSQPLQVPHA) are cleaved as a propeptide — removed in mature form; by autocatalysis. T53 acts as the Nucleophile in catalysis.

This sequence belongs to the peptidase T1B family. In terms of assembly, the 20S proteasome core is composed of 14 alpha and 14 beta subunits that assemble into four stacked heptameric rings, resulting in a barrel-shaped structure. The two inner rings, each composed of seven catalytic beta subunits, are sandwiched by two outer rings, each composed of seven alpha subunits. The catalytic chamber with the active sites is on the inside of the barrel. Has a gated structure, the ends of the cylinder being occluded by the N-termini of the alpha-subunits. Is capped by the proteasome-associated ATPase, ARC.

It localises to the cytoplasm. It catalyses the reaction Cleavage of peptide bonds with very broad specificity.. It functions in the pathway protein degradation; proteasomal Pup-dependent pathway. The formation of the proteasomal ATPase ARC-20S proteasome complex, likely via the docking of the C-termini of ARC into the intersubunit pockets in the alpha-rings, may trigger opening of the gate for substrate entry. Interconversion between the open-gate and close-gate conformations leads to a dynamic regulation of the 20S proteasome proteolysis activity. Functionally, component of the proteasome core, a large protease complex with broad specificity involved in protein degradation. The protein is Proteasome subunit beta of Arthrobacter sp. (strain FB24).